Reading from the N-terminus, the 380-residue chain is Cytochrome b (380 aa).

Transmembrane regions (helical) follow at residues 33 to 53, 77 to 98, 113 to 133, and 178 to 198; these read FGSL…FLAM, WLIR…YLHV, WNIG…GYVL, and FFAF…LHLL. Residues H83 and H97 each coordinate heme b. Heme b is bound by residues H182 and H196. H201 provides a ligand contact to a ubiquinone. The next 4 helical transmembrane spans lie at 226-246, 288-308, 320-340, and 347-367; these read YKDI…ALFS, LGGV…PILH, FSQF…WIGG, and FIII…LLIP.

It belongs to the cytochrome b family. In terms of assembly, the cytochrome bc1 complex contains 3 respiratory subunits (MT-CYB, CYC1 and UQCRFS1), 2 core proteins (UQCRC1 and UQCRC2) and probably 6 low-molecular weight proteins. It depends on heme b as a cofactor.

It localises to the mitochondrion inner membrane. Component of the ubiquinol-cytochrome c reductase complex (complex III or cytochrome b-c1 complex) that is part of the mitochondrial respiratory chain. The b-c1 complex mediates electron transfer from ubiquinol to cytochrome c. Contributes to the generation of a proton gradient across the mitochondrial membrane that is then used for ATP synthesis. The protein is Cytochrome b (mt-cyb) of Arapaima gigas (Arapaima).